The chain runs to 306 residues: Ribosomal protein L11 methyltransferase (306 aa).

4 residues coordinate S-adenosyl-L-methionine: Thr154, Gly179, Asp201, and Asn242.

It belongs to the methyltransferase superfamily. PrmA family.

The protein resides in the cytoplasm. It catalyses the reaction L-lysyl-[protein] + 3 S-adenosyl-L-methionine = N(6),N(6),N(6)-trimethyl-L-lysyl-[protein] + 3 S-adenosyl-L-homocysteine + 3 H(+). Its function is as follows. Methylates ribosomal protein L11. This is Ribosomal protein L11 methyltransferase from Xylella fastidiosa (strain 9a5c).